A 136-amino-acid polypeptide reads, in one-letter code: Probable 5-hydroxyisourate hydrolase ZK697.8 (136 aa).

The signal sequence occupies residues 1–19; it reads MIKFLLFLAIAAATVISNA. Substrate contacts are provided by histidine 31, arginine 69, and tyrosine 133.

It belongs to the transthyretin family. 5-hydroxyisourate hydrolase subfamily. Homotetramer.

The enzyme catalyses 5-hydroxyisourate + H2O = 5-hydroxy-2-oxo-4-ureido-2,5-dihydro-1H-imidazole-5-carboxylate + H(+). In terms of biological role, catalyzes the hydrolysis of 5-hydroxyisourate (HIU) to 2-oxo-4-hydroxy-4-carboxy-5-ureidoimidazoline (OHCU). This chain is Probable 5-hydroxyisourate hydrolase ZK697.8, found in Caenorhabditis elegans.